Here is a 322-residue protein sequence, read N- to C-terminus: Probable ATP-dependent 6-phosphofructokinase (322 aa).

ATP contacts are provided by residues Gly11, 72-73 (RF), and 102-105 (GDGS). Residue Asp103 coordinates Mg(2+). Residues 125–127 (TID), 169–171 (MGR), Glu222, Lys249, and 255–258 (YLQR) each bind substrate. The Proton acceptor role is filled by Asp127.

Belongs to the phosphofructokinase type A (PFKA) family. Homotetramer. It depends on Mg(2+) as a cofactor.

The protein localises to the cytoplasm. It catalyses the reaction beta-D-fructose 6-phosphate + ATP = beta-D-fructose 1,6-bisphosphate + ADP + H(+). Its pathway is carbohydrate degradation; glycolysis; D-glyceraldehyde 3-phosphate and glycerone phosphate from D-glucose: step 3/4. Its function is as follows. Catalyzes the phosphorylation of D-fructose 6-phosphate to fructose 1,6-bisphosphate by ATP, the first committing step of glycolysis. This Malacoplasma penetrans (strain HF-2) (Mycoplasma penetrans) protein is Probable ATP-dependent 6-phosphofructokinase (pfkA).